The sequence spans 353 residues: MYKIVSIPGDGIGPEVVAGALAVIRQITKKHGFEIQVEEHPFGGASYDLHGSMLTDETLNACRDCDAVLLGAVGGPKWENLPHEHKPEAALLKIRRELGLFANLRPAKVYDALVDASSLKADVVRGTDFMVFRELTGGIYFGEPRGFDEKRGWNTMVYEKHEVERIARLAFEAAQKRGSKRVMSIDKANVLEVSQFWRNEVHRVHRDFPDVELSDMYVDNAAMQIVRNPKQFDVIVTGNLFGDILSDIAGMITGSLGMLPSASIGRVHALYEPIHGSAPDIAGKNIANPIATIASVAMMFEHSFCMADISNEIHAAIEGALSEGLRTADIAAPGQKSVSTTEMTEGIIRHLGA.

75–88 is a binding site for NAD(+); it reads GPKWENLPHEHKPE. Residues Arg95, Arg105, Arg133, and Asp219 each coordinate substrate. Residues Asp219, Asp243, and Asp247 each contribute to the Mg(2+) site. Residue 276–288 coordinates NAD(+); sequence GSAPDIAGKNIAN.

Belongs to the isocitrate and isopropylmalate dehydrogenases family. LeuB type 1 subfamily. Homodimer. The cofactor is Mg(2+). Mn(2+) serves as cofactor.

The protein localises to the cytoplasm. It catalyses the reaction (2R,3S)-3-isopropylmalate + NAD(+) = 4-methyl-2-oxopentanoate + CO2 + NADH. Its pathway is amino-acid biosynthesis; L-leucine biosynthesis; L-leucine from 3-methyl-2-oxobutanoate: step 3/4. Catalyzes the oxidation of 3-carboxy-2-hydroxy-4-methylpentanoate (3-isopropylmalate) to 3-carboxy-4-methyl-2-oxopentanoate. The product decarboxylates to 4-methyl-2 oxopentanoate. This chain is 3-isopropylmalate dehydrogenase, found in Chlorobium luteolum (strain DSM 273 / BCRC 81028 / 2530) (Pelodictyon luteolum).